The primary structure comprises 172 residues: UPF0102 protein Pcryo_2198 (172 aa).

It belongs to the UPF0102 family.

This is UPF0102 protein Pcryo_2198 from Psychrobacter cryohalolentis (strain ATCC BAA-1226 / DSM 17306 / VKM B-2378 / K5).